Consider the following 85-residue polypeptide: UPF0386 protein HNE_3437 (85 aa).

It belongs to the UPF0386 family.

This is UPF0386 protein HNE_3437 from Hyphomonas neptunium (strain ATCC 15444).